The following is a 656-amino-acid chain: Putative cysteine-rich receptor-like protein kinase 32 (656 aa).

Residues 1–23 (MCLQNLLSILCFVLAISFGYVSA) form the signal peptide. Gnk2-homologous domains lie at 24–126 (QKCV…NSSF) and 134–238 (PTMV…GSEY). Over 24 to 262 (QKCVDSMFFR…PDGKTISTGA (239 aa)) the chain is Extracellular. 5 N-linked (GlcNAc...) asparagine glycosylation sites follow: asparagine 35, asparagine 52, asparagine 61, asparagine 103, and asparagine 123. The helical transmembrane segment at 263–283 (IVAVVVSVVIFVVLLALVLVI) threads the bilayer. Residues 284-656 (RKRRQSYKTL…SASITRVTPR (373 aa)) are Cytoplasmic-facing. The Protein kinase domain maps to 321 to 606 (FSRNNKLGKG…IFQMLTNSSI (286 aa)). Residues 327 to 335 (LGKGGFGEV) and lysine 349 each bind ATP. A Phosphotyrosine modification is found at tyrosine 394. Catalysis depends on aspartate 454, which acts as the Proton acceptor. Position 458 is a phosphoserine (serine 458). Threonine 494 bears the Phosphothreonine mark. Phosphotyrosine is present on tyrosine 502.

It belongs to the protein kinase superfamily. Ser/Thr protein kinase family. CRK subfamily.

It localises to the membrane. It carries out the reaction L-seryl-[protein] + ATP = O-phospho-L-seryl-[protein] + ADP + H(+). It catalyses the reaction L-threonyl-[protein] + ATP = O-phospho-L-threonyl-[protein] + ADP + H(+). This Arabidopsis thaliana (Mouse-ear cress) protein is Putative cysteine-rich receptor-like protein kinase 32 (CRK32).